We begin with the raw amino-acid sequence, 512 residues long: Cobyric acid synthase (512 aa).

Positions 254 to 455 (EIDIAVVKLP…LHGLFDNKAL (202 aa)) constitute a GATase cobBQ-type domain. Cysteine 335 serves as the catalytic Nucleophile. The active site involves histidine 447.

The protein belongs to the CobB/CobQ family. CobQ subfamily.

The protein operates within cofactor biosynthesis; adenosylcobalamin biosynthesis. Functionally, catalyzes amidations at positions B, D, E, and G on adenosylcobyrinic A,C-diamide. NH(2) groups are provided by glutamine, and one molecule of ATP is hydrogenolyzed for each amidation. In Desulforamulus reducens (strain ATCC BAA-1160 / DSM 100696 / MI-1) (Desulfotomaculum reducens), this protein is Cobyric acid synthase.